A 351-amino-acid chain; its full sequence is Biotin synthase (351 aa).

In terms of domain architecture, Radical SAM core spans 73 to 298 (PEVEVEGIIS…RTILRYSGGR (226 aa)). [4Fe-4S] cluster-binding residues include Cys-88, Cys-92, and Cys-95. Residues Cys-131, Cys-164, Cys-223, and Arg-293 each contribute to the [2Fe-2S] cluster site.

Belongs to the radical SAM superfamily. Biotin synthase family. As to quaternary structure, homodimer. [4Fe-4S] cluster is required as a cofactor. Requires [2Fe-2S] cluster as cofactor.

The enzyme catalyses (4R,5S)-dethiobiotin + (sulfur carrier)-SH + 2 reduced [2Fe-2S]-[ferredoxin] + 2 S-adenosyl-L-methionine = (sulfur carrier)-H + biotin + 2 5'-deoxyadenosine + 2 L-methionine + 2 oxidized [2Fe-2S]-[ferredoxin]. It functions in the pathway cofactor biosynthesis; biotin biosynthesis; biotin from 7,8-diaminononanoate: step 2/2. Catalyzes the conversion of dethiobiotin (DTB) to biotin by the insertion of a sulfur atom into dethiobiotin via a radical-based mechanism. This chain is Biotin synthase, found in Frankia alni (strain DSM 45986 / CECT 9034 / ACN14a).